Consider the following 275-residue polypeptide: 6-deoxy-6-sulfo-D-fructose transketolase subunit SqwG (275 aa).

It belongs to the transketolase family. Forms a complex with SqwH. Thiamine diphosphate serves as cofactor.

It catalyses the reaction 6-deoxy-6-sulfo-D-fructose + D-glyceraldehyde 3-phosphate = 4-deoxy-4-sulfo-D-erythrose + D-xylulose 5-phosphate. The catalysed reaction is 4-deoxy-4-sulfo-D-erythrulose + D-glyceraldehyde 3-phosphate = sulfoacetaldehyde + D-xylulose 5-phosphate. Its function is as follows. Part of the sulfo-TK pathway, a D-sulfoquinovose degradation pathway that produces 2-hydroxyethane-1-sulfonate (isethionate). Catalyzes two steps of the pathway: the formation of 4-deoxy-4-sulfoerythrose (SE) and xylulose 5-phosphate from 6-deoxy-6-sulfo-D-fructose (SF) and glyceraldehyde 3-phosphate, and the formation of sulfoacetaldehyde (SA) and xylulose 5-phosphate from 4-deoxy-4-sulfo-D-erythrulose (SEu) and glyceraldehyde 3-phosphate. In Clostridium sp. (strain MSTE9), this protein is 6-deoxy-6-sulfo-D-fructose transketolase subunit SqwG.